The primary structure comprises 133 residues: Small ribosomal subunit protein uS8 (133 aa).

Residues 1-28 (MANHDPISDMLTRIRNASEKRHEKTKVP) are disordered. Positions 16–26 (NASEKRHEKTK) are enriched in basic and acidic residues.

The protein belongs to the universal ribosomal protein uS8 family. Part of the 30S ribosomal subunit. Contacts proteins S5 and S12.

Its function is as follows. One of the primary rRNA binding proteins, it binds directly to 16S rRNA central domain where it helps coordinate assembly of the platform of the 30S subunit. The polypeptide is Small ribosomal subunit protein uS8 (Prochlorococcus marinus (strain NATL1A)).